Here is a 354-residue protein sequence, read N- to C-terminus: Glycerol-1-phosphate dehydrogenase [NAD(P)+] (354 aa).

NAD(+)-binding positions include 102–106 and 124–127; these read GRSID and TAAS. Asp-129 provides a ligand contact to substrate. An NAD(+)-binding site is contributed by Ser-133. Position 176 (Asp-176) interacts with substrate. Residues Asp-176 and His-256 each contribute to the Zn(2+) site. A substrate-binding site is contributed by His-260. His-272 lines the Zn(2+) pocket.

This sequence belongs to the glycerol-1-phosphate dehydrogenase family. Requires Zn(2+) as cofactor.

It localises to the cytoplasm. It catalyses the reaction sn-glycerol 1-phosphate + NAD(+) = dihydroxyacetone phosphate + NADH + H(+). It carries out the reaction sn-glycerol 1-phosphate + NADP(+) = dihydroxyacetone phosphate + NADPH + H(+). Its pathway is membrane lipid metabolism; glycerophospholipid metabolism. Its function is as follows. Catalyzes the NAD(P)H-dependent reduction of dihydroxyacetonephosphate (DHAP or glycerone phosphate) to glycerol 1-phosphate (G1P). The G1P thus generated is used as the glycerophosphate backbone of phospholipids in the cellular membranes of Archaea. The protein is Glycerol-1-phosphate dehydrogenase [NAD(P)+] of Methanothrix thermoacetophila (strain DSM 6194 / JCM 14653 / NBRC 101360 / PT) (Methanosaeta thermophila).